Here is a 724-residue protein sequence, read N- to C-terminus: Protein Aster-A (724 aa).

Over residues 1–18 the composition is skewed to low complexity; sequence MFDTTPHSGRSTPSSSPS. Residues 1-66 form a disordered region; sequence MFDTTPHSGR…TPSTQSLGSR (66 aa). The span at 57-66 shows a compositional bias: polar residues; it reads TPSTQSLGSR. A GRAM domain is found at 91–158; it reads EDFRKLFSKL…KEVTCLKKEK (68 aa). The tract at residues 256-336 is disordered; that stretch reads SSGAADRSQE…GPTTLGPLDL (81 aa). Residues S263, S267, and S271 each carry the phosphoserine modification. The segment covering 300 to 312 has biased composition (polar residues); it reads DSQPDASSSQTVT. Residues 326–336 are compositionally biased toward low complexity; the sequence is DGPTTLGPLDL. The VASt domain maps to 367 to 538; it reads SGRLLINSVF…ELAKAEKLSL (172 aa). Position 415 is a phosphoserine (S415). Positions 560-579 are disordered; that stretch reads SWRAHGDGPQHPDPDPCARA. The span at 563–575 shows a compositional bias: basic and acidic residues; sequence AHGDGPQHPDPDP. Residues 610-630 form a helical membrane-spanning segment; it reads LISIVICVSLIILIALNVLLF.

As to expression, expressed in liver.

The protein resides in the endoplasmic reticulum membrane. The protein localises to the cell membrane. It is found in the cytoplasmic vesicle. It localises to the autophagosome. Its function is as follows. Cholesterol transporter that mediates non-vesicular transport of cholesterol from the plasma membrane (PM) to the endoplasmic reticulum (ER). Contains unique domains for binding cholesterol and the PM, thereby serving as a molecular bridge for the transfer of cholesterol from the PM to the ER. Plays a crucial role in cholesterol homeostasis and has the unique ability to localize to the PM based on the level of membrane cholesterol. In lipid-poor conditions localizes to the ER membrane and in response to excess cholesterol in the PM is recruited to the endoplasmic reticulum-plasma membrane contact sites (EPCS) which is mediated by the GRAM domain. At the EPCS, the sterol-binding VASt/ASTER domain binds to the cholesterol in the PM and facilitates its transfer from the PM to ER. May play a role in tumor progression. Plays a role in autophagy regulation and is required for biogenesis of the autophagosome. This function in autophagy requires its cholesterol-transfer activity. In Homo sapiens (Human), this protein is Protein Aster-A.